The chain runs to 774 residues: Chondroitin sulfate synthase 2 (774 aa).

Over 1-15 the chain is Cytoplasmic; the sequence is MRASLLLSVLRPAGP. A helical; Signal-anchor for type II membrane protein membrane pass occupies residues 16 to 34; the sequence is VAVGISLGFTLSLLSVTWV. The Lumenal segment spans residues 35 to 774; sequence EEPCGPGPPQ…LFEQEQGNST (740 aa). The segment at 37–103 is disordered; that stretch reads PCGPGPPQPG…AQPGQATKKA (67 aa). Polar residues predominate over residues 54–67; the sequence is GNTNAARRPNSVQP. Asn138 and Asn361 each carry an N-linked (GlcNAc...) asparagine glycan. Asp616 serves as a coordination point for a divalent metal cation.

This sequence belongs to the chondroitin N-acetylgalactosaminyltransferase family. As to quaternary structure, interacts with PRKN. Mn(2+) is required as a cofactor. The cofactor is Co(2+). As to expression, isoform 1, isoform 2 and isoform 3 are expressed in brain (at protein level).

The protein localises to the golgi apparatus. It is found in the golgi stack membrane. Its subcellular location is the cytoplasm. It localises to the cytosol. The protein resides in the mitochondrion. The protein localises to the mitochondrion matrix. The enzyme catalyses 3-O-(beta-D-GlcA-(1-&gt;3)-beta-D-GalNAc-(1-&gt;4)-beta-D-GlcA-(1-&gt;3)-beta-D-Gal-(1-&gt;3)-beta-D-Gal-(1-&gt;4)-beta-D-Xyl)-L-seryl-[protein] + UDP-N-acetyl-alpha-D-galactosamine = 3-O-(beta-D-GalNAc-(1-&gt;4)-beta-D-GlcA-(1-&gt;3)-beta-D-GalNAc-(1-&gt;4)-beta-D-GlcA-(1-&gt;3)-beta-D-Gal-(1-&gt;3)-beta-D-Gal-(1-&gt;4)-beta-D-Xyl)-L-seryl-[protein] + UDP + H(+). It catalyses the reaction 3-O-{beta-D-GlcA-(1-&gt;3)-[beta-D-GalNAc-(1-&gt;4)-beta-D-GlcA-(1-&gt;3)](n)-beta-D-GalNAc-(1-&gt;4)-beta-D-GlcA-(1-&gt;3)-beta-D-Gal-(1-&gt;3)-beta-D-Gal-(1-&gt;4)-beta-D-Xyl}-L-seryl-[protein] + UDP-N-acetyl-alpha-D-galactosamine = 3-O-{[beta-D-GalNAc-(1-&gt;4)-beta-D-GlcA-(1-&gt;3)](n+1)-beta-D-GalNAc-(1-&gt;4)-beta-D-GlcA-(1-&gt;3)-beta-D-Gal-(1-&gt;3)-beta-D-Gal-(1-&gt;4)-beta-D-Xyl}-L-seryl-[protein] + UDP + H(+). The catalysed reaction is 3-O-(beta-D-GalNAc-(1-&gt;4)-beta-D-GlcA-(1-&gt;3)-beta-D-Gal-(1-&gt;3)-beta-D-Gal-(1-&gt;4)-beta-D-Xyl)-L-seryl-[protein] + UDP-alpha-D-glucuronate = 3-O-(beta-D-GlcA-(1-&gt;3)-beta-D-GalNAc-(1-&gt;4)-beta-D-GlcA-(1-&gt;3)-beta-D-Gal-(1-&gt;3)-beta-D-Gal-(1-&gt;4)-beta-D-Xyl)-L-seryl-[protein] + UDP + H(+). It carries out the reaction 3-O-{[beta-D-GalNAc-(1-&gt;4)-beta-D-GlcA-(1-&gt;3)](n)-beta-D-GalNAc-(1-&gt;4)-beta-D-GlcA-(1-&gt;3)-beta-D-Gal-(1-&gt;3)-beta-D-Gal-(1-&gt;4)-beta-D-Xyl}-L-seryl-[protein] + UDP-alpha-D-glucuronate = 3-O-{beta-D-GlcA-(1-&gt;3)-[beta-D-GalNAc-(1-&gt;4)-beta-D-GlcA-(1-&gt;3)](n)-beta-D-GalNAc-(1-&gt;4)-beta-D-GlcA-(1-&gt;3)-beta-D-Gal-(1-&gt;3)-beta-D-Gal-(1-&gt;4)-beta-D-Xyl}-L-seryl-[protein] + UDP + H(+). Functionally, has both beta-1,3-glucuronic acid and beta-1,4-N-acetylgalactosamine transferase activity. Transfers glucuronic acid (GlcUA) from UDP-GlcUA and N-acetylgalactosamine (GalNAc) from UDP-GalNAc to the non-reducing end of the elongating chondroitin polymer. Seems to act as a specific activating factor for CHSY1 in chondroitin polymerization. May facilitate PRKN transport into the mitochondria. In collaboration with PRKN, may enhance cell viability and protect cells from oxidative stress. The sequence is that of Chondroitin sulfate synthase 2 from Mus musculus (Mouse).